The following is a 460-amino-acid chain: C4-dicarboxylate transport protein (460 aa).

9 helical membrane passes run 20–40 (SLYFQVIVAIVIGILIGHFYP), 56–76 (LIKMVIAPIIFCTVVSGIAGM), 88–108 (YALLYFEIVSTIALLIGLIVV), 153–173 (IVGAFANGDILQVLMFSVIFG), 200–220 (IINMIMKLAPIGAFGAMAFTI), 234–254 (LMICFYITCALFVVLVLGAIC), 301–321 (VVGLVIPTGYSFNLDGTSIYL), 342–362 (ITLLLVLLLSSKGAAGVTGSG), and 364–384 (IVLAATLSAVGHLPVAGLALI). Positions 438 to 460 (PEDDLGVAEGPTPANAVNTTKTV) are disordered.

This sequence belongs to the dicarboxylate/amino acid:cation symporter (DAACS) (TC 2.A.23) family.

It is found in the cell inner membrane. Functionally, responsible for the transport of dicarboxylates such as succinate, fumarate, and malate from the periplasm across the membrane. This is C4-dicarboxylate transport protein from Pseudomonas savastanoi pv. phaseolicola (strain 1448A / Race 6) (Pseudomonas syringae pv. phaseolicola (strain 1448A / Race 6)).